Here is a 1018-residue protein sequence, read N- to C-terminus: MLPAKYSPKDVESEIFKFWEDNDIYRKVKEKGGRKFYFVDGPPYTTGRIHLGTAWNKVLKDTILRYKRMMGFAPTDTPGWDMHGLPIEVKVEQELGFRTKRDIESFGIDKFIERCMNYALANKDAMTEQFKSLAVWMDWENPYMTIKAEYMNAAWFAIKRAHERGLLERKKMVVNWCHRCETALADAEVEYWDEEDPSIYVKFPVKGEKDTYIVIWTTTPWTLPANMAVAVHPSLEYAKFRAVKDGKVEYLILAKELADSVLGKGDYDSWEVVETYLGEDLEGLEYEHPLADEVPLQKNWKHQVFFADFVTAENTGCVHIAPGHGVEDYELGVEKGLEVFNPVDDRGVYTEEAGKYAGKHVKEANDDIIDDLYRKDLLLAEERIVHRYGHCWRCKTPIIYRATEQWFIKISELKDEMLEEIDKVMWIPEWAGSARFKDWVSNAKDWCISRQRYWGIPIPVWICEKCGEMKVVGSINEIEWENDLDLHRPKIDAVTFSCQCGGVMRRVPDVFDVWFDSGVASWGSIAYPLRKDKFEELWPADFITEGHDQTRGWFYSQLGTSVVCFDKAPYKAVLMHGFTLDEQGRKMSKSLGNVVEPEEVVGQIGVDGFRLYVLYSAPWEDLRFSWEEARNINRMLNVVWNAVRFAHTYMSLDNYSFGEKGELKIEDRWILSRLESFIKEANEAMEGYQVHRVVRAFFDFFVEDFSRWYIQIIRPRVWEERDSPSKLAAYYTMFRVIDRSLRAIAPFAPLIAEWFYQHVVKEFREGEESIFMEEYSTAEVEMIDGELEAAMKVAKEIVEAAANARNKAKRKLRWPLRELVIESGSEKVRKAVEMLEETILSQCNVKQVRVVDSFEKEIEIKPNYKYIGPLLKEKAGEFAKYVASLKEIPEKLVFDGVELDPKQAIVVDYRLPEGYEYAEFSGGVVYIYKELDDELVREAFAREVIRRIQEMRKELDLDVEEFIETTVEMDAELVKGWEDYIKSETRSQKLVFGKAEGYVREWNIEGKKVKIGIKRLRG.

The short motif at 43–53 (PYTTGRIHLGT) is the 'HIGH' region element. A 'KMSKS' region motif is present at residues 586–590 (KMSKS). Lysine 589 contributes to the ATP binding site.

The protein belongs to the class-I aminoacyl-tRNA synthetase family. IleS type 2 subfamily. Monomer. It depends on Zn(2+) as a cofactor.

The protein localises to the cytoplasm. The catalysed reaction is tRNA(Ile) + L-isoleucine + ATP = L-isoleucyl-tRNA(Ile) + AMP + diphosphate. Its function is as follows. Catalyzes the attachment of isoleucine to tRNA(Ile). As IleRS can inadvertently accommodate and process structurally similar amino acids such as valine, to avoid such errors it has two additional distinct tRNA(Ile)-dependent editing activities. One activity is designated as 'pretransfer' editing and involves the hydrolysis of activated Val-AMP. The other activity is designated 'posttransfer' editing and involves deacylation of mischarged Val-tRNA(Ile). The protein is Isoleucine--tRNA ligase of Archaeoglobus fulgidus (strain ATCC 49558 / DSM 4304 / JCM 9628 / NBRC 100126 / VC-16).